A 256-amino-acid chain; its full sequence is DNA repair protein RecO (256 aa).

The protein belongs to the RecO family.

Functionally, involved in DNA repair and RecF pathway recombination. The chain is DNA repair protein RecO from Streptococcus equi subsp. zooepidemicus (strain MGCS10565).